Reading from the N-terminus, the 115-residue chain is Large ribosomal subunit protein bL21 (115 aa).

This sequence belongs to the bacterial ribosomal protein bL21 family. As to quaternary structure, part of the 50S ribosomal subunit. Contacts protein L20.

Its function is as follows. This protein binds to 23S rRNA in the presence of protein L20. The sequence is that of Large ribosomal subunit protein bL21 from Coxiella burnetii (strain RSA 331 / Henzerling II).